Consider the following 144-residue polypeptide: Large ribosomal subunit protein uL16 (144 aa).

Positions 1–16 are enriched in basic residues; it reads MLVPKRVKHRKVQRGH. Positions 1–20 are disordered; it reads MLVPKRVKHRKVQRGHMRGE.

Belongs to the universal ribosomal protein uL16 family. Part of the 50S ribosomal subunit.

In terms of biological role, binds 23S rRNA and is also seen to make contacts with the A and possibly P site tRNAs. This is Large ribosomal subunit protein uL16 from Limosilactobacillus reuteri (strain DSM 20016) (Lactobacillus reuteri).